The following is a 166-amino-acid chain: MVLNQEKLAKLQAASRTGGKGTPRRKMAPKPKGPGGEDPKLQAALKKLQVEPVSGVEEVNMFKEDGNVLHFAAPKVHGLPTSNTFAVYGNGVDKELTELVPGILNQLGPDSLASLRKLAESYQAMNAQHAASQAAAAGTKDDDDVPDVVENFDEADKKETEVDKLD.

Disordered regions lie at residues 1-40 (MVLNQEKLAKLQAASRTGGKGTPRRKMAPKPKGPGGEDPK) and 129-166 (HAASQAAAAGTKDDDDVPDVVENFDEADKKETEVDKLD). The 66-residue stretch at 35 to 100 (GGEDPKLQAA…GVDKELTELV (66 aa)) folds into the NAC-A/B domain. The span at 141-153 (DDDDVPDVVENFD) shows a compositional bias: acidic residues. Over residues 154 to 166 (EADKKETEVDKLD) the composition is skewed to basic and acidic residues.

The protein belongs to the NAC-beta family. In terms of assembly, part of the nascent polypeptide-associated complex (NAC), consisting of EGD2 and EGD1. NAC associates with ribosomes via EGD1.

It localises to the cytoplasm. Its subcellular location is the nucleus. In terms of biological role, component of the nascent polypeptide-associated complex (NAC), a dynamic component of the ribosomal exit tunnel, protecting the emerging polypeptides from interaction with other cytoplasmic proteins to ensure appropriate nascent protein targeting. The NAC complex also promotes mitochondrial protein import by enhancing productive ribosome interactions with the outer mitochondrial membrane and blocks the inappropriate interaction of ribosomes translating non-secretory nascent polypeptides with translocation sites in the membrane of the endoplasmic reticulum. EGD1 may act as a transcription factor that exert a negative effect on the expression of several genes that are transcribed by RNA polymerase II. This Mycosarcoma maydis (Corn smut fungus) protein is Nascent polypeptide-associated complex subunit beta (EGD1).